The sequence spans 603 residues: Adenine deaminase (603 aa).

This sequence belongs to the metallo-dependent hydrolases superfamily. Adenine deaminase family. Mn(2+) serves as cofactor.

It carries out the reaction adenine + H2O + H(+) = hypoxanthine + NH4(+). The protein is Adenine deaminase of Ruegeria pomeroyi (strain ATCC 700808 / DSM 15171 / DSS-3) (Silicibacter pomeroyi).